We begin with the raw amino-acid sequence, 248 residues long: uncharacterized protein (248 aa).

This sequence belongs to the glycosyltransferase 2 family.

This is an uncharacterized protein from Acanthamoeba polyphaga (Amoeba).